A 242-amino-acid chain; its full sequence is Proteasome subunit beta type-4 (242 aa).

The propeptide occupies 1–23 (ESVARGTAPGELHCFPGAGPVRH). Threonine 24 serves as the catalytic Nucleophile.

Belongs to the peptidase T1B family. In terms of assembly, the 26S proteasome consists of a 20S proteasome core and two 19S regulatory subunits. The 20S proteasome core is composed of 28 subunits that are arranged in four stacked rings, resulting in a barrel-shaped structure. The two end rings are each formed by seven alpha subunits, and the two central rings are each formed by seven beta subunits. The catalytic chamber with the active sites is on the inside of the barrel.

The protein resides in the cytoplasm. Its subcellular location is the nucleus. Functionally, non-catalytic component of the proteasome, a multicatalytic proteinase complex which is characterized by its ability to cleave peptides with Arg, Phe, Tyr, Leu, and Glu adjacent to the leaving group at neutral or slightly basic pH. The proteasome has an ATP-dependent proteolytic activity. The polypeptide is Proteasome subunit beta type-4 (psmb4) (Xenopus laevis (African clawed frog)).